The following is a 207-amino-acid chain: MGKCSGRCTLVAFCCLQLVAALQRQIFDFLGYQWAPILANFLHIMAVILGIFGTVQYRSRYLILYAAWLVLWVGWNAFIICFYLEVGQLSQDRDFIMTFNTSLHRSWWMENGPGCLVTPVLNSRLALEDHHVISVTGCLLDYPYIEALSSALQIFLALFGFVFACYVSKVFLEEEDSFDFIGGFDSYGYQAPQKTSHLQLQPLYTSG.

3 helical membrane-spanning segments follow: residues glycine 2–leucine 22, alanine 35–valine 55, and leucine 62–phenylalanine 82. N-linked (GlcNAc...) asparagine glycosylation occurs at asparagine 100. The chain crosses the membrane as a helical span at residues alanine 147–valine 167.

It belongs to the NKAIN family. Interacts with ATP1B1 C-terminus. In terms of tissue distribution, detected in the brain only and specifically in neurons. Expressed in multiple regions such as cerebral cortex, thalamus, hippocampus, olfactory bulb and brainstem as well as in cerebellum with high expression in granular cell layer.

The protein resides in the cell membrane. This Mus musculus (Mouse) protein is Sodium/potassium-transporting ATPase subunit beta-1-interacting protein 1 (Nkain1).